The following is a 388-amino-acid chain: Chorismate synthase (388 aa).

2 residues coordinate NADP(+): Arg39 and Arg45. FMN contacts are provided by residues 132-134 (RSS), 251-252 (NA), Gly296, 311-315 (KPIPT), and Arg337.

This sequence belongs to the chorismate synthase family. As to quaternary structure, homotetramer. It depends on FMNH2 as a cofactor.

It catalyses the reaction 5-O-(1-carboxyvinyl)-3-phosphoshikimate = chorismate + phosphate. The protein operates within metabolic intermediate biosynthesis; chorismate biosynthesis; chorismate from D-erythrose 4-phosphate and phosphoenolpyruvate: step 7/7. Functionally, catalyzes the anti-1,4-elimination of the C-3 phosphate and the C-6 proR hydrogen from 5-enolpyruvylshikimate-3-phosphate (EPSP) to yield chorismate, which is the branch point compound that serves as the starting substrate for the three terminal pathways of aromatic amino acid biosynthesis. This reaction introduces a second double bond into the aromatic ring system. In Staphylococcus carnosus (strain TM300), this protein is Chorismate synthase.